Here is a 480-residue protein sequence, read N- to C-terminus: Glycogen synthase (480 aa).

Residue K15 coordinates ADP-alpha-D-glucose.

Belongs to the glycosyltransferase 1 family. Bacterial/plant glycogen synthase subfamily.

It carries out the reaction [(1-&gt;4)-alpha-D-glucosyl](n) + ADP-alpha-D-glucose = [(1-&gt;4)-alpha-D-glucosyl](n+1) + ADP + H(+). It functions in the pathway glycan biosynthesis; glycogen biosynthesis. In terms of biological role, synthesizes alpha-1,4-glucan chains using ADP-glucose. The sequence is that of Glycogen synthase from Granulibacter bethesdensis (strain ATCC BAA-1260 / CGDNIH1).